A 107-amino-acid polypeptide reads, in one-letter code: Small ribosomal subunit protein uS10 (107 aa).

Belongs to the universal ribosomal protein uS10 family. In terms of assembly, part of the 30S ribosomal subunit.

Functionally, involved in the binding of tRNA to the ribosomes. The protein is Small ribosomal subunit protein uS10 of Deinococcus deserti (strain DSM 17065 / CIP 109153 / LMG 22923 / VCD115).